The sequence spans 113 residues: UPF0482 protein YnfB (113 aa).

The N-terminal stretch at 1–28 (MNNTLSKRLCLTAMLTLAAVVYTTSAFA) is a signal peptide.

It belongs to the UPF0482 family.

This Salmonella agona (strain SL483) protein is UPF0482 protein YnfB.